Consider the following 205-residue polypeptide: Histidine biosynthesis bifunctional protein HisIE (205 aa).

The interval 1–115 is phosphoribosyl-AMP cyclohydrolase; sequence MIDIKELKFD…DEETEDGIEI (115 aa). Residues 116–205 form a phosphoribosyl-ATP pyrophosphohydrolase region; sequence LNKLYERIKG…YNELERRYKK (90 aa).

It in the N-terminal section; belongs to the PRA-CH family. In the C-terminal section; belongs to the PRA-PH family.

The protein localises to the cytoplasm. It catalyses the reaction 1-(5-phospho-beta-D-ribosyl)-ATP + H2O = 1-(5-phospho-beta-D-ribosyl)-5'-AMP + diphosphate + H(+). It carries out the reaction 1-(5-phospho-beta-D-ribosyl)-5'-AMP + H2O = 1-(5-phospho-beta-D-ribosyl)-5-[(5-phospho-beta-D-ribosylamino)methylideneamino]imidazole-4-carboxamide. Its pathway is amino-acid biosynthesis; L-histidine biosynthesis; L-histidine from 5-phospho-alpha-D-ribose 1-diphosphate: step 2/9. It participates in amino-acid biosynthesis; L-histidine biosynthesis; L-histidine from 5-phospho-alpha-D-ribose 1-diphosphate: step 3/9. The protein is Histidine biosynthesis bifunctional protein HisIE of Caldanaerobacter subterraneus subsp. tengcongensis (strain DSM 15242 / JCM 11007 / NBRC 100824 / MB4) (Thermoanaerobacter tengcongensis).